The primary structure comprises 475 residues: Ribulose bisphosphate carboxylase large chain (475 aa).

Positions 1-2 are excised as a propeptide; that stretch reads MS. Pro-3 is subject to N-acetylproline. Residue Lys-14 is modified to N6,N6,N6-trimethyllysine. The substrate site is built by Asn-123 and Thr-173. Lys-175 (proton acceptor) is an active-site residue. Lys-177 contacts substrate. 3 residues coordinate Mg(2+): Lys-201, Asp-203, and Glu-204. An N6-carboxylysine modification is found at Lys-201. His-294 acts as the Proton acceptor in catalysis. Substrate-binding residues include Arg-295, His-327, and Ser-379.

The protein belongs to the RuBisCO large chain family. Type I subfamily. In terms of assembly, heterohexadecamer of 8 large chains and 8 small chains; disulfide-linked. The disulfide link is formed within the large subunit homodimers. The cofactor is Mg(2+). Post-translationally, the disulfide bond which can form in the large chain dimeric partners within the hexadecamer appears to be associated with oxidative stress and protein turnover.

It localises to the plastid. Its subcellular location is the chloroplast. It carries out the reaction 2 (2R)-3-phosphoglycerate + 2 H(+) = D-ribulose 1,5-bisphosphate + CO2 + H2O. It catalyses the reaction D-ribulose 1,5-bisphosphate + O2 = 2-phosphoglycolate + (2R)-3-phosphoglycerate + 2 H(+). RuBisCO catalyzes two reactions: the carboxylation of D-ribulose 1,5-bisphosphate, the primary event in carbon dioxide fixation, as well as the oxidative fragmentation of the pentose substrate in the photorespiration process. Both reactions occur simultaneously and in competition at the same active site. The polypeptide is Ribulose bisphosphate carboxylase large chain (Magnolia macrophylla (Bigleaf magnolia)).